The primary structure comprises 60 residues: Light-harvesting protein B-800/850 alpha chain (60 aa).

Residues 1-14 are Cytoplasmic-facing; sequence MNNAKIWTVVKPST. The helical transmembrane segment at 15-35 threads the bilayer; the sequence is GIPLILGAVAVAALIVHAGLL. His31 lines the a bacteriochlorophyll pocket. Over 36–60 the chain is Periplasmic; it reads TNTTWFANYWNGNPMATVVAVAPAQ.

This sequence belongs to the antenna complex alpha subunit family. In terms of assembly, the core complex is formed by different alpha and beta chains, binding bacteriochlorophyll molecules, and arranged most probably in tetrameric structures disposed around the reaction center. The non-pigmented gamma chains may constitute additional components.

The protein localises to the cell inner membrane. Its function is as follows. Antenna complexes are light-harvesting systems, which transfer the excitation energy to the reaction centers. The protein is Light-harvesting protein B-800/850 alpha chain (pucA) of Rhodobacter capsulatus (Rhodopseudomonas capsulata).